A 680-amino-acid chain; its full sequence is Probable Xaa-Pro aminopeptidase P (680 aa).

Residues Asp-477, Asp-488, Glu-586, and Glu-600 each coordinate Mn(2+).

The protein belongs to the peptidase M24B family. Requires Mn(2+) as cofactor.

It catalyses the reaction Release of any N-terminal amino acid, including proline, that is linked to proline, even from a dipeptide or tripeptide.. Functionally, catalyzes the removal of a penultimate prolyl residue from the N-termini of peptides. The sequence is that of Probable Xaa-Pro aminopeptidase P (AMPP) from Podospora anserina (strain S / ATCC MYA-4624 / DSM 980 / FGSC 10383) (Pleurage anserina).